A 528-amino-acid chain; its full sequence is Glutamate--cysteine ligase (528 aa).

Belongs to the glutamate--cysteine ligase type 1 family. Type 1 subfamily.

The catalysed reaction is L-cysteine + L-glutamate + ATP = gamma-L-glutamyl-L-cysteine + ADP + phosphate + H(+). The protein operates within sulfur metabolism; glutathione biosynthesis; glutathione from L-cysteine and L-glutamate: step 1/2. The sequence is that of Glutamate--cysteine ligase from Janthinobacterium sp. (strain Marseille) (Minibacterium massiliensis).